The primary structure comprises 174 residues: MASNSTREKLIALAHKFCSIISSGDMEAVLALRTESCLTYQCCPSFSTRPLNNQETREYFEEWKHIGWNSKFWIIDEGTMVVDEAAKKIAFRAACSADTIGGPYENENLVILQATDDCALVDGIWEFFDAVRKQDLMNRLAAKQAAKGLDSWCANTHSGDDKGVPANNESKVAA.

Belongs to the trt14 isomerase family. Homodimer.

It functions in the pathway secondary metabolite biosynthesis; terpenoid biosynthesis. Its function is as follows. Isomerase; part of the gene cluster that mediates the biosynthesis of paraherquonin, a meroterpenoid with a unique, highly congested hexacyclic molecular architecture. The first step of the pathway is the synthesis of 3,5-dimethylorsellinic acid (DMOA) by the polyketide synthase prhL. Synthesis of DMOA is followed by farnesylation by the prenyltransferase prhE, methylesterification by the methyl-transferase prhM, epoxidation of the prenyl chain by the flavin-dependent monooxygenase prhF, and cyclization of the farnesyl moiety by the terpene cyclase prhH, to yield the tetracyclic intermediate, protoaustinoid A. The short chain dehydrogenase prhI then oxidizes the C-3 alcohol group of the terpene cyclase product to transform protoaustinoid A into protoaustinoid B. The FAD-binding monooxygenase prhJ catalyzes the oxidation of protoaustinoid B into preaustinoid A which is further oxidized into preaustinoid A1 by FAD-binding monooxygenase phrK. Finally, prhA leads to berkeleydione via the berkeleyone B intermediate. PrhA is a multifunctional dioxygenase that first desaturates at C5-C6 to form berkeleyone B, followed by rearrangement of the A/B-ring to form the cycloheptadiene moiety in berkeleydione. Berkeleydione serves as the key intermediate for the biosynthesis of paraherquonin as well as many other meroterpenoids. The cytochrome P450 monooxygenases prhB, prhD, and prhN, as well as the isomerase prhC, are probably involved in the late stage of paraherquonin biosynthesis, after the production of berkeleydione. Especially prhC might be a multifunctional enzyme that catalyzes the D-ring expansion via intramolecular methoxy rearrangement, as well as the hydrolysis of the expanded D-ring. This Penicillium brasilianum protein is Isomerase prhC.